The sequence spans 610 residues: UvrABC system protein C (610 aa).

Positions 16–94 constitute a GIY-YIG domain; sequence SQPGVYRMYD…IKLYQPRYNV (79 aa). Residues 204-239 form the UVR domain; the sequence is DQVLNQLVARMEQASGDLRFEEAGRLRDQIQAVRRV.

Belongs to the UvrC family. As to quaternary structure, interacts with UvrB in an incision complex.

It is found in the cytoplasm. Its function is as follows. The UvrABC repair system catalyzes the recognition and processing of DNA lesions. UvrC both incises the 5' and 3' sides of the lesion. The N-terminal half is responsible for the 3' incision and the C-terminal half is responsible for the 5' incision. This is UvrABC system protein C from Erwinia tasmaniensis (strain DSM 17950 / CFBP 7177 / CIP 109463 / NCPPB 4357 / Et1/99).